The following is a 103-amino-acid chain: Co-chaperonin GroES (103 aa).

This sequence belongs to the GroES chaperonin family. As to quaternary structure, heptamer of 7 subunits arranged in a ring. Interacts with the chaperonin GroEL.

The protein localises to the plastid. It is found in the cyanelle. Functionally, together with the chaperonin GroEL, plays an essential role in assisting protein folding. The GroEL-GroES system forms a nano-cage that allows encapsulation of the non-native substrate proteins and provides a physical environment optimized to promote and accelerate protein folding. GroES binds to the apical surface of the GroEL ring, thereby capping the opening of the GroEL channel. The polypeptide is Co-chaperonin GroES (Cyanophora paradoxa).